Reading from the N-terminus, the 385-residue chain is Probable caffeine synthase 4 (385 aa).

The S-adenosyl-L-homocysteine site is built by Y18, C62, N67, D101, L102, S140, and F141. Caffeine is bound by residues Y158, Q161, and F162. N179 provides a ligand contact to Mg(2+). T238 contributes to the caffeine binding site. Mg(2+) contacts are provided by D261, F263, and N264. Y369 provides a ligand contact to caffeine.

This sequence belongs to the methyltransferase superfamily. Type-7 methyltransferase family. It depends on Mg(2+) as a cofactor. As to expression, expressed in roots, stems, young and old leaves.

The protein operates within alkaloid biosynthesis. Its function is as follows. May be involved in the biosynthesis of caffeine. This Coffea arabica (Arabian coffee) protein is Probable caffeine synthase 4.